The following is a 367-amino-acid chain: 4-hydroxy-3-methylbut-2-en-1-yl diphosphate synthase (flavodoxin) (367 aa).

Positions 270, 273, 305, and 312 each coordinate [4Fe-4S] cluster.

The protein belongs to the IspG family. Requires [4Fe-4S] cluster as cofactor.

The enzyme catalyses (2E)-4-hydroxy-3-methylbut-2-enyl diphosphate + oxidized [flavodoxin] + H2O + 2 H(+) = 2-C-methyl-D-erythritol 2,4-cyclic diphosphate + reduced [flavodoxin]. Its pathway is isoprenoid biosynthesis; isopentenyl diphosphate biosynthesis via DXP pathway; isopentenyl diphosphate from 1-deoxy-D-xylulose 5-phosphate: step 5/6. Converts 2C-methyl-D-erythritol 2,4-cyclodiphosphate (ME-2,4cPP) into 1-hydroxy-2-methyl-2-(E)-butenyl 4-diphosphate. The chain is 4-hydroxy-3-methylbut-2-en-1-yl diphosphate synthase (flavodoxin) from Buchnera aphidicola subsp. Schizaphis graminum (strain Sg).